We begin with the raw amino-acid sequence, 375 residues long: Alpha-2,8-sialyltransferase 8B (375 aa).

Topologically, residues 1–6 are cytoplasmic; it reads MQLQFR. Residues 7–23 form a helical; Signal-anchor for type II membrane protein membrane-spanning segment; the sequence is SWMLAALTLLVVFLIFA. Over 24–375 the chain is Lumenal; the sequence is DISEIEEEIG…LTVGQCDGAT (352 aa). 4 N-linked (GlcNAc...) asparagine glycosylation sites follow: Asn-60, Asn-72, Asn-89, and Asn-134. 2 disulfide bridges follow: Cys-157–Cys-307 and Cys-171–Cys-371. Residues Asn-162 and Asn-185 each coordinate CMP-N-acetyl-beta-neuraminate. N-linked (GlcNAc...) asparagine glycans are attached at residues Asn-219 and Asn-234. Positions 294, 295, 296, 316, 329, and 330 each coordinate CMP-N-acetyl-beta-neuraminate. His-346 (proton donor/acceptor) is an active-site residue.

This sequence belongs to the glycosyltransferase 29 family. In terms of processing, autopolysialylated. Autopolysialylation is not a prerequisite for the polysialylation acitity, but enhances the polysialylation acitity.

It is found in the golgi apparatus membrane. Its subcellular location is the secreted. It localises to the cell membrane. It carries out the reaction [N-acetyl-alpha-D-neuraminosyl-(2-&gt;8)](n) + CMP-N-acetyl-beta-neuraminate = [N-acetyl-alpha-D-neuraminosyl-(2-&gt;8)](n+1) + CMP + H(+). It functions in the pathway protein modification; protein glycosylation. In terms of biological role, catalyzes the transfer of a sialic acid from a CMP-linked sialic acid donor onto a terminal alpha-2,3-, alpha-2,6-, or alpha-2,8-linked sialic acid of an N-linked glycan acceptor through alpha-2,8-linkages. Therefore, participates in polysialic acid synthesis on various sialylated N-acetyllactosaminyl oligosaccharides (alpha-2,3-, alpha-2,6-, or alpha-2,8-linked sialic acid), including NCAM1, NCAM1 N-glycans, FETUB N-glycans, and to a lesser extent sialylparagloboside (SPG) and AHSG, which does not require the initial addition of an alpha 2,8-sialic acid. However, does not exhibit sialic acid-polymerase activity. Catalyzes polysialic acid synthesis in the hippocampal on NCAM1 and supports neurite outgrowth. ST8SIA2-mediated polysialylation influences on oligodendrocyte differentiation and may promote the integrity of myelin and axons. The protein is Alpha-2,8-sialyltransferase 8B of Mus musculus (Mouse).